The primary structure comprises 341 residues: CRISPR-associated endonuclease Cas1 (341 aa).

The Mn(2+) site is built by Glu173, His242, and Glu257.

It belongs to the CRISPR-associated endonuclease Cas1 family. Homodimer, forms a heterotetramer with a Cas2 homodimer. Mg(2+) is required as a cofactor. Requires Mn(2+) as cofactor.

In terms of biological role, CRISPR (clustered regularly interspaced short palindromic repeat), is an adaptive immune system that provides protection against mobile genetic elements (viruses, transposable elements and conjugative plasmids). CRISPR clusters contain spacers, sequences complementary to antecedent mobile elements, and target invading nucleic acids. CRISPR clusters are transcribed and processed into CRISPR RNA (crRNA). Acts as a dsDNA endonuclease. Involved in the integration of spacer DNA into the CRISPR cassette. The sequence is that of CRISPR-associated endonuclease Cas1 from Korarchaeum cryptofilum (strain OPF8).